The sequence spans 278 residues: Myb/SANT-like DNA-binding domain-containing protein 1 (278 aa).

Residues 1–27 (MVRGAGPGPSLSALSHPTGASGMAAAE) form a disordered region. One can recognise a Myb-like domain in the interval 44 to 129 (RNWTDAEMRG…PDWPYYLAID (86 aa)). The tract at residues 138–168 (SCDGKLPDSQPPGPSTSQTEASLSPPAKSTP) is disordered.

This Homo sapiens (Human) protein is Myb/SANT-like DNA-binding domain-containing protein 1 (MSANTD1).